Reading from the N-terminus, the 639-residue chain is Probable potassium transport system protein Kup 1 (639 aa).

12 helical membrane-spanning segments follow: residues 27–47, 64–84, 115–135, 151–171, 182–202, 225–245, 261–281, 293–313, 351–371, 377–397, 408–428, and 430–450; these read AILG…LYAF, VIGL…FKYI, VLIV…MITP, PAMD…LFAI, FFGP…LIHI, GFYG…AEAL, WFCL…ALVL, LMFP…ATII, IYLP…VLTF, LATA…LMFF, IWLA…FLGA, and LLKI…FTVI.

It belongs to the HAK/KUP transporter (TC 2.A.72) family.

The protein localises to the cell inner membrane. The catalysed reaction is K(+)(in) + H(+)(in) = K(+)(out) + H(+)(out). In terms of biological role, transport of potassium into the cell. Likely operates as a K(+):H(+) symporter. The chain is Probable potassium transport system protein Kup 1 from Agrobacterium fabrum (strain C58 / ATCC 33970) (Agrobacterium tumefaciens (strain C58)).